We begin with the raw amino-acid sequence, 343 residues long: Ricin B-like lectin R40G2 (343 aa).

One can recognise a Ricin B-type lectin domain in the interval 194 to 340 (TVRVFSAAGE…CEGDNQRWKI (147 aa)).

In terms of biological role, lectin which binds carbohydrates in vitro. Interacts through its lectin domain with glycan structures containing specific motifs. The polypeptide is Ricin B-like lectin R40G2 (Oryza sativa subsp. japonica (Rice)).